Consider the following 258-residue polypeptide: Ribosomal RNA large subunit methyltransferase E (258 aa).

5 residues coordinate S-adenosyl-L-methionine: G58, W60, D78, D96, and D120. K160 functions as the Proton acceptor in the catalytic mechanism.

It belongs to the class I-like SAM-binding methyltransferase superfamily. RNA methyltransferase RlmE family.

The protein resides in the cytoplasm. The catalysed reaction is uridine(2552) in 23S rRNA + S-adenosyl-L-methionine = 2'-O-methyluridine(2552) in 23S rRNA + S-adenosyl-L-homocysteine + H(+). Specifically methylates the uridine in position 2552 of 23S rRNA at the 2'-O position of the ribose in the fully assembled 50S ribosomal subunit. In Methanococcus maripaludis (strain C5 / ATCC BAA-1333), this protein is Ribosomal RNA large subunit methyltransferase E.